We begin with the raw amino-acid sequence, 172 residues long: Ribosome maturation factor RimP (172 aa).

It belongs to the RimP family.

It localises to the cytoplasm. Required for maturation of 30S ribosomal subunits. The chain is Ribosome maturation factor RimP from Nitratidesulfovibrio vulgaris (strain ATCC 29579 / DSM 644 / CCUG 34227 / NCIMB 8303 / VKM B-1760 / Hildenborough) (Desulfovibrio vulgaris).